We begin with the raw amino-acid sequence, 253 residues long: HTH-type transcriptional regulator YdeO (253 aa).

One can recognise an HTH araC/xylS-type domain in the interval 137–233; it reads GKVRNIVNMK…GNSPKRVSKE (97 aa). 2 consecutive DNA-binding regions (H-T-H motif) follow at residues 154-175 and 200-223; these read KDIC…KQEQ and VNKI…RKHF.

Functionally, induces the expression of gadE. Could also regulate the expression of other genes involved in acid resistance. This Shigella flexneri protein is HTH-type transcriptional regulator YdeO (ydeO).